The chain runs to 187 residues: Troponin I, slow skeletal muscle (187 aa).

Residue proline 2 is modified to N-acetylproline. The interval 2-48 (PEVERKSKITASRKLMLKSLMLAKAKECWEQEHEEREAEKVRYLSER) is involved in binding TNC. Serine 58 is modified (phosphoserine). The segment at 97–118 (LKLKVLDLRGKFKRPPLRRVRV) is involved in binding TNC and actin.

It belongs to the troponin I family. In terms of assembly, binds to actin and tropomyosin.

Functionally, troponin I is the inhibitory subunit of troponin, the thin filament regulatory complex which confers calcium-sensitivity to striated muscle actomyosin ATPase activity. The polypeptide is Troponin I, slow skeletal muscle (Tnni1) (Rattus norvegicus (Rat)).